The chain runs to 252 residues: Aspartate/glutamate leucyltransferase (252 aa).

Belongs to the R-transferase family. Bpt subfamily.

The protein localises to the cytoplasm. It carries out the reaction N-terminal L-glutamyl-[protein] + L-leucyl-tRNA(Leu) = N-terminal L-leucyl-L-glutamyl-[protein] + tRNA(Leu) + H(+). It catalyses the reaction N-terminal L-aspartyl-[protein] + L-leucyl-tRNA(Leu) = N-terminal L-leucyl-L-aspartyl-[protein] + tRNA(Leu) + H(+). Functionally, functions in the N-end rule pathway of protein degradation where it conjugates Leu from its aminoacyl-tRNA to the N-termini of proteins containing an N-terminal aspartate or glutamate. This Agrobacterium fabrum (strain C58 / ATCC 33970) (Agrobacterium tumefaciens (strain C58)) protein is Aspartate/glutamate leucyltransferase.